A 605-amino-acid polypeptide reads, in one-letter code: Pyruvate decarboxylase 1 (605 aa).

Residues Asp-67 and His-154 each contribute to the substrate site. Residues 432-514 form a thiamine pyrophosphate binding region; it reads DSWFNCQKLR…FLINNGGYTI (83 aa). Residues Asp-482, Asn-509, and Gly-511 each contribute to the Mg(2+) site. Glu-515 lines the substrate pocket.

Belongs to the TPP enzyme family. Homotetramer. The cofactor is a metal cation. Thiamine diphosphate serves as cofactor.

The catalysed reaction is a 2-oxocarboxylate + H(+) = an aldehyde + CO2. This is Pyruvate decarboxylase 1 (PDC1) from Oryza sativa subsp. indica (Rice).